Reading from the N-terminus, the 499-residue chain is Hepatic triacylglycerol lipase (499 aa).

The signal sequence occupies residues 1–22 (MDTSPLCFSILLVLCIFIQSSA). Residues Asn42 and Asn78 are each glycosylated (N-linked (GlcNAc...) asparagine). The active-site Nucleophile is Ser168. Catalysis depends on Asp194, which acts as the Charge relay system. The tract at residues 254–277 (CHFLELYRHIAQHGFNAITQTIKC) is essential for determining substrate specificity. His279 (charge relay system) is an active-site residue. The 135-residue stretch at 352-486 (YHYQFKIQFI…RPTQEKIFVK (135 aa)) folds into the PLAT domain. Residues Asn362 and Asn397 are each glycosylated (N-linked (GlcNAc...) asparagine).

This sequence belongs to the AB hydrolase superfamily. Lipase family. As to quaternary structure, homodimer.

It localises to the secreted. The catalysed reaction is a triacylglycerol + H2O = a diacylglycerol + a fatty acid + H(+). The enzyme catalyses a 1-acyl-sn-glycero-3-phosphocholine + H2O = sn-glycerol 3-phosphocholine + a fatty acid + H(+). It catalyses the reaction a 1,2-diacyl-sn-glycero-3-phosphocholine + H2O = a 2-acyl-sn-glycero-3-phosphocholine + a fatty acid + H(+). It carries out the reaction 1,2,3-tri-(9Z-octadecenoyl)-glycerol + H2O = di-(9Z)-octadecenoylglycerol + (9Z)-octadecenoate + H(+). The catalysed reaction is 1,2-di-(9Z-octadecenoyl)-sn-glycero-3-phosphocholine + H2O = (9Z-octadecenoyl)-sn-glycero-3-phosphocholine + (9Z)-octadecenoate + H(+). The enzyme catalyses 1,2,3-tributanoylglycerol + H2O = dibutanoylglycerol + butanoate + H(+). It catalyses the reaction 1,2-dihexadecanoyl-sn-glycero-3-phosphocholine + H2O = hexadecanoyl-sn-glycero-3-phosphocholine + hexadecanoate + H(+). It carries out the reaction 1,2-di-(9Z-octadecenoyl)-sn-glycerol + H2O = 2-(9Z-octadecenoyl)-glycerol + (9Z)-octadecenoate + H(+). The catalysed reaction is 1,2,3-tri-(9Z-octadecenoyl)-glycerol + H2O = 2,3-di-(9Z)-octadecenoyl-sn-glycerol + (9Z)-octadecenoate + H(+). The enzyme catalyses 1-(9Z-octadecenoyl)-sn-glycero-3-phospho-L-serine + H2O = sn-glycero-3-phospho-L-serine + (9Z)-octadecenoate + H(+). It catalyses the reaction 1-hexadecanoyl-sn-glycero-3-phosphocholine + H2O = sn-glycerol 3-phosphocholine + hexadecanoate + H(+). It carries out the reaction 1,3-di-(9Z-octadecenoyl)-glycerol + H2O = 3-(9Z-octadecenoyl)-sn-glycerol + (9Z)-octadecenoate + H(+). Phospholipase A1 and triacylglycerol lipase are inhibited by sphingomyelin. Catalyzes the hydrolysis of triglycerides and phospholipids present in circulating plasma lipoproteins, including chylomicrons, intermediate density lipoproteins (IDL), low density lipoproteins (LDL) of large size and high density lipoproteins (HDL), releasing free fatty acids (FFA) and smaller lipoprotein particles. Also exhibits lysophospholipase activity. Can hydrolyze both neutral lipid and phospholipid substrates but shows a greater binding affinity for neutral lipid substrates than phospholipid substrates. In native LDL, preferentially hydrolyzes the phosphatidylcholine species containing polyunsaturated fatty acids at sn-2 position. The polypeptide is Hepatic triacylglycerol lipase (LIPC) (Homo sapiens (Human)).